Consider the following 557-residue polypeptide: Formate--tetrahydrofolate ligase (557 aa).

65–72 provides a ligand contact to ATP; the sequence is TPAGEGKT.

This sequence belongs to the formate--tetrahydrofolate ligase family.

The catalysed reaction is (6S)-5,6,7,8-tetrahydrofolate + formate + ATP = (6R)-10-formyltetrahydrofolate + ADP + phosphate. Its pathway is one-carbon metabolism; tetrahydrofolate interconversion. In Methylobacterium radiotolerans (strain ATCC 27329 / DSM 1819 / JCM 2831 / NBRC 15690 / NCIMB 10815 / 0-1), this protein is Formate--tetrahydrofolate ligase.